The primary structure comprises 648 residues: PAN2-PAN3 deadenylation complex subunit PAN3 (648 aa).

Residues 1 to 24 form a disordered region; sequence MAATRYPPNDLRRQVGSPRSKGRE. Residues 24–53 form a C3H1-type zinc finger; sequence ENKDTLCRNILIYGNCRYEDQGCTFNHDQN. The pseudokinase domain stretch occupies residues 244-506; sequence QVMPNSGLPQ…SIENFISGIA (263 aa). Residues Arg-295, 345-352, and 404-405 each bind ATP; these read DYHPLSKT and SK. Positions 507–545 form a coiled coil; that stretch reads THMTAFFDLALQDGDEKQFHLARELENGRIARSMMKLMT. Residues 546-648 are knob domain; the sequence is IIERAEPGGA…SKTGAPGANN (103 aa).

This sequence belongs to the protein kinase superfamily. PAN3 family. Homodimer. Forms a heterotrimer with a catalytic subunit PAN2 to form the poly(A)-nuclease (PAN) deadenylation complex. Interacts (via PAM-2 motif) with poly(A)-binding protein PAB1 (via PABC domain), conferring substrate specificity of the enzyme complex.

Its subcellular location is the cytoplasm. Functionally, regulatory subunit of the poly(A)-nuclease (PAN) deadenylation complex, one of two cytoplasmic mRNA deadenylases involved in mRNA turnover. PAN specifically shortens poly(A) tails of RNA and the activity is stimulated by poly(A)-binding protein PAB1. PAN deadenylation is followed by rapid degradation of the shortened mRNA tails by the CCR4-NOT complex. Deadenylated mRNAs are then degraded by two alternative mechanisms, namely exosome-mediated 3'-5' exonucleolytic degradation, or deadenylation-dependent mRNA decaping and subsequent 5'-3' exonucleolytic degradation by XRN1. May also be involved in post-transcriptional maturation of mRNA poly(A) tails. PAN3 acts as a positive regulator for PAN activity, recruiting the catalytic subunit PAN2 to mRNA via its interaction with RNA and with PAB1. This Chaetomium globosum (strain ATCC 6205 / CBS 148.51 / DSM 1962 / NBRC 6347 / NRRL 1970) (Soil fungus) protein is PAN2-PAN3 deadenylation complex subunit PAN3.